An 860-amino-acid polypeptide reads, in one-letter code: DNA mismatch repair protein MutS (860 aa).

ATP is bound at residue 621 to 628 (GPNMGGKS).

This sequence belongs to the DNA mismatch repair MutS family.

This protein is involved in the repair of mismatches in DNA. It is possible that it carries out the mismatch recognition step. This protein has a weak ATPase activity. This Salmonella arizonae (strain ATCC BAA-731 / CDC346-86 / RSK2980) protein is DNA mismatch repair protein MutS.